We begin with the raw amino-acid sequence, 317 residues long: Glutathione synthetase (317 aa).

In terms of domain architecture, ATP-grasp spans 125–311 (EKMFATLFPQ…IGGKLMDAID (187 aa)). An ATP-binding site is contributed by 152 to 208 (TAKHADVILKPLDGMGGTSIFRHRAGDPNLSVILETLTALGTQQIMAQAYLPAIKDG). Residues Glu282 and Asn284 each coordinate Mg(2+).

This sequence belongs to the prokaryotic GSH synthase family. The cofactor is Mg(2+). Mn(2+) serves as cofactor.

The catalysed reaction is gamma-L-glutamyl-L-cysteine + glycine + ATP = glutathione + ADP + phosphate + H(+). Its pathway is sulfur metabolism; glutathione biosynthesis; glutathione from L-cysteine and L-glutamate: step 2/2. The sequence is that of Glutathione synthetase from Pseudomonas putida (strain ATCC 47054 / DSM 6125 / CFBP 8728 / NCIMB 11950 / KT2440).